The chain runs to 376 residues: Carbamoyl phosphate synthase small chain (376 aa).

Residues 1 to 183 (MENILLNKAL…IYKKKYIEKN (183 aa)) form a CPSase region. 3 residues coordinate L-glutamine: serine 51, glycine 235, and glycine 237. In terms of domain architecture, Glutamine amidotransferase type-1 spans 187 to 374 (NIVAYDFGIK…INLVKDYRLN (188 aa)). Cysteine 263 acts as the Nucleophile in catalysis. Leucine 264, glutamine 267, asparagine 305, and phenylalanine 308 together coordinate L-glutamine. Residues histidine 347 and glutamate 349 contribute to the active site.

It belongs to the CarA family. In terms of assembly, composed of two chains; the small (or glutamine) chain promotes the hydrolysis of glutamine to ammonia, which is used by the large (or ammonia) chain to synthesize carbamoyl phosphate. Tetramer of heterodimers (alpha,beta)4.

The catalysed reaction is hydrogencarbonate + L-glutamine + 2 ATP + H2O = carbamoyl phosphate + L-glutamate + 2 ADP + phosphate + 2 H(+). The enzyme catalyses L-glutamine + H2O = L-glutamate + NH4(+). Its pathway is amino-acid biosynthesis; L-arginine biosynthesis; carbamoyl phosphate from bicarbonate: step 1/1. It participates in pyrimidine metabolism; UMP biosynthesis via de novo pathway; (S)-dihydroorotate from bicarbonate: step 1/3. Functionally, small subunit of the glutamine-dependent carbamoyl phosphate synthetase (CPSase). CPSase catalyzes the formation of carbamoyl phosphate from the ammonia moiety of glutamine, carbonate, and phosphate donated by ATP, constituting the first step of 2 biosynthetic pathways, one leading to arginine and/or urea and the other to pyrimidine nucleotides. The small subunit (glutamine amidotransferase) binds and cleaves glutamine to supply the large subunit with the substrate ammonia. The protein is Carbamoyl phosphate synthase small chain of Wigglesworthia glossinidia brevipalpis.